A 188-amino-acid chain; its full sequence is dCTP deaminase (188 aa).

Residues 111-116 (KSTYAR), 135-137 (TLE), Q156, Y170, and Q180 contribute to the dCTP site. E137 functions as the Proton donor/acceptor in the catalytic mechanism.

The protein belongs to the dCTP deaminase family. In terms of assembly, homotrimer.

It carries out the reaction dCTP + H2O + H(+) = dUTP + NH4(+). It functions in the pathway pyrimidine metabolism; dUMP biosynthesis; dUMP from dCTP (dUTP route): step 1/2. Catalyzes the deamination of dCTP to dUTP. This is dCTP deaminase from Aromatoleum aromaticum (strain DSM 19018 / LMG 30748 / EbN1) (Azoarcus sp. (strain EbN1)).